Consider the following 353-residue polypeptide: Rhodopsin (353 aa).

Over 1 to 36 (MNGTEGENFYIPFSNKTGLARSPFEYPQYYLAEPWK) the chain is Extracellular. 2 N-linked (GlcNAc...) asparagine glycosylation sites follow: N2 and N15. The helical transmembrane segment at 37–61 (YSVLAAYMFFLILVGFPVNFLTLFV) threads the bilayer. Over 62–73 (TVQHKKLRTPLN) the chain is Cytoplasmic. Residues 74–96 (YILLNLAVANLFMVLFGFTLTMY) form a helical membrane-spanning segment. The Extracellular portion of the chain corresponds to 97-110 (SSMNGYFVFGPTMC). C110 and C187 are joined by a disulfide. Residues 111-133 (NFEGFFATLGGEMSLWSLVVLAI) traverse the membrane as a helical segment. The 'Ionic lock' involved in activated form stabilization motif lies at 134–136 (ERY). At 134 to 152 (ERYIVICKPMGNFRFGSTH) the chain is on the cytoplasmic side. Residues 153–173 (AYMGVAFTWFMALSCAAPPLV) form a helical membrane-spanning segment. Residues 174-202 (GWSRYLPEGMQCSCGPDYYTLNPNFNNES) lie on the Extracellular side of the membrane. A helical membrane pass occupies residues 203 to 224 (FVIYMFLVHFIIPFIVIFFCYG). Over 225 to 252 (RLLCTVKEAAAAQQESASTQKAEKEVTR) the chain is Cytoplasmic. Residues 253–274 (MVVLMVIGFLVCWVPYASVAFY) traverse the membrane as a helical segment. The Extracellular portion of the chain corresponds to 275-286 (IFTHQGSDFGAT). The chain crosses the membrane as a helical span at residues 287–308 (FMTVPAFFAKTSALYNPIIYIL). At K296 the chain carries N6-(retinylidene)lysine. At 309-353 (MNKQFRNCMITTLCCGKNPLGDEDSGASTSKTEVSSVSTSQVSPA) the chain is on the cytoplasmic side. Residues 330–353 (DEDSGASTSKTEVSSVSTSQVSPA) are disordered. A compositionally biased stretch (low complexity) spans 336–353 (STSKTEVSSVSTSQVSPA).

It belongs to the G-protein coupled receptor 1 family. Opsin subfamily. In terms of processing, phosphorylated on some or all of the serine and threonine residues present in the C-terminal region. Contains one covalently linked retinal chromophore.

It is found in the membrane. The protein resides in the cell projection. It localises to the cilium. Its subcellular location is the photoreceptor outer segment. Functionally, photoreceptor required for image-forming vision at low light intensity. While most salt water fish species use retinal as chromophore, most freshwater fish use 3-dehydroretinal, or a mixture of retinal and 3-dehydroretinal. Light-induced isomerization of 11-cis to all-trans retinal triggers a conformational change that activates signaling via G-proteins. Subsequent receptor phosphorylation mediates displacement of the bound G-protein alpha subunit by arrestin and terminates signaling. The polypeptide is Rhodopsin (RHO) (Petromyzon marinus (Sea lamprey)).